A 241-amino-acid polypeptide reads, in one-letter code: Lactate utilization protein C (241 aa).

This sequence belongs to the LutC/YkgG family.

In terms of biological role, is involved in L-lactate degradation and allows cells to grow with lactate as the sole carbon source. The chain is Lactate utilization protein C from Geobacillus sp. (strain WCH70).